Consider the following 197-residue polypeptide: Adenylylsulfatase HINT3 (197 aa).

A disordered region spans residues 14–43 (NPPGPNPTRDPTLRVSDCSSGSSGDGKVES). One can recognise an HIT domain in the interval 51–158 (VFCKIIRGES…IPRKERDCLW (108 aa)). The Histidine triad motif signature appears at 143-147 (HTHIH). Catalysis depends on histidine 145, which acts as the Tele-AMP-histidine intermediate. Histidine 147 is a binding site for substrate.

Its subcellular location is the peroxisome. The enzyme catalyses adenosine 5'-phosphosulfate + H2O = sulfate + AMP + 2 H(+). Its function is as follows. Possesses adenylylsulfatase activity in vitro. This is Adenylylsulfatase HINT3 from Arabidopsis thaliana (Mouse-ear cress).